Reading from the N-terminus, the 424-residue chain is Tyrosine--tRNA ligase (424 aa).

L-tyrosine is bound at residue Y37. The 'HIGH' region signature appears at 42 to 51; it reads PTADSLHLGH. The L-tyrosine site is built by Y175 and Q179. Residues 235–239 carry the 'KMSKS' region motif; sequence KFGKT. K238 serves as a coordination point for ATP. Positions 357 to 414 constitute an S4 RNA-binding domain; that stretch reads ADLQQALVAAELVPSRGQARTLISSNAVSVNGEKQASIDYVFDDADRLYSRYTLLRRG.

Belongs to the class-I aminoacyl-tRNA synthetase family. TyrS type 1 subfamily. In terms of assembly, homodimer.

It localises to the cytoplasm. The enzyme catalyses tRNA(Tyr) + L-tyrosine + ATP = L-tyrosyl-tRNA(Tyr) + AMP + diphosphate + H(+). Functionally, catalyzes the attachment of tyrosine to tRNA(Tyr) in a two-step reaction: tyrosine is first activated by ATP to form Tyr-AMP and then transferred to the acceptor end of tRNA(Tyr). The polypeptide is Tyrosine--tRNA ligase (Sodalis glossinidius (strain morsitans)).